Here is a 224-residue protein sequence, read N- to C-terminus: UPF0758 protein NE1464 (224 aa).

The region spanning 102-224 (IMDSPQSVRN…VVSFAERGLI (123 aa)) is the MPN domain. Zn(2+)-binding residues include H173, H175, and D186. The JAMM motif signature appears at 173–186 (HNHPSGIAEPSTAD).

Belongs to the UPF0758 family.

The protein is UPF0758 protein NE1464 of Nitrosomonas europaea (strain ATCC 19718 / CIP 103999 / KCTC 2705 / NBRC 14298).